Here is a 441-residue protein sequence, read N- to C-terminus: Putative transporter AmpG 1 (441 aa).

12 consecutive transmembrane segments (helical) span residues S5 to G25, I42 to F62, L78 to L98, L104 to I124, G143 to L163, E171 to A191, S249 to Y269, V297 to M317, S325 to I345, L352 to I372, F390 to V410, and F413 to L433.

The protein belongs to the major facilitator superfamily.

Its subcellular location is the cell inner membrane. This Rickettsia felis (strain ATCC VR-1525 / URRWXCal2) (Rickettsia azadi) protein is Putative transporter AmpG 1 (ampG1).